The primary structure comprises 700 residues: Mitogen-activated protein kinase 9 (700 aa).

The Protein kinase domain occupies 107–398 (YRIQEVIGKG…AEEALTDPYF (292 aa)). Residues 113 to 121 (IGKGSYGVV) and Lys-136 each bind ATP. Asp-233 (proton acceptor) is an active-site residue. Position 269 is a phosphothreonine (Thr-269). A TXY motif is present at residues 269 to 271 (TDY). Residue Tyr-271 is modified to Phosphotyrosine. The tract at residues 475-523 (EESNGSGSAIPMERKHASLPRSTTVHSTPIPPKEQPLAASLKSSRPVSD) is disordered.

It belongs to the protein kinase superfamily. CMGC Ser/Thr protein kinase family. MAP kinase subfamily. Dually phosphorylated on Thr-269 and Tyr-271, which activates the enzyme.

It carries out the reaction L-seryl-[protein] + ATP = O-phospho-L-seryl-[protein] + ADP + H(+). The enzyme catalyses L-threonyl-[protein] + ATP = O-phospho-L-threonyl-[protein] + ADP + H(+). Its activity is regulated as follows. Activated by threonine and tyrosine phosphorylation. This is Mitogen-activated protein kinase 9 (MPK9) from Oryza sativa subsp. japonica (Rice).